We begin with the raw amino-acid sequence, 802 residues long: Phenylalanine--tRNA ligase beta subunit (802 aa).

The 112-residue stretch at 38–149 folds into the tRNA-binding domain; it reads KSSLKPFVIA…ADAPVGTSFA (112 aa). Positions 399 to 474 constitute a B5 domain; it reads HKPKIVSFPI…RIHGVDNIAP (76 aa). Residues aspartate 452, aspartate 458, glutamate 461, and glutamate 462 each coordinate Mg(2+). The region spanning 708-801 is the FDX-ACB domain; the sequence is SAFQAVKRDF…VGKQTGGVLR (94 aa).

Belongs to the phenylalanyl-tRNA synthetase beta subunit family. Type 1 subfamily. Tetramer of two alpha and two beta subunits. Mg(2+) is required as a cofactor.

It localises to the cytoplasm. It catalyses the reaction tRNA(Phe) + L-phenylalanine + ATP = L-phenylalanyl-tRNA(Phe) + AMP + diphosphate + H(+). In Mesorhizobium japonicum (strain LMG 29417 / CECT 9101 / MAFF 303099) (Mesorhizobium loti (strain MAFF 303099)), this protein is Phenylalanine--tRNA ligase beta subunit.